The chain runs to 198 residues: Holliday junction branch migration complex subunit RuvA (198 aa).

Residues 1–63 are domain I; the sequence is MYDYIKGQLT…EDAHLLFGFH (63 aa). The domain II stretch occupies residues 64 to 142; it reads TEDEKDVFLK…EAPQETGHTK (79 aa). The segment at 143 to 147 is flexible linker; that stretch reads ARSNK. Positions 148–198 are domain III; that stretch reads AGNTQLDEAIEALLALGYKATELKKIRAFFEGTSETAEQYIKSALKLLMKG.

It belongs to the RuvA family. Homotetramer. Forms an RuvA(8)-RuvB(12)-Holliday junction (HJ) complex. HJ DNA is sandwiched between 2 RuvA tetramers; dsDNA enters through RuvA and exits via RuvB. An RuvB hexamer assembles on each DNA strand where it exits the tetramer. Each RuvB hexamer is contacted by two RuvA subunits (via domain III) on 2 adjacent RuvB subunits; this complex drives branch migration. In the full resolvosome a probable DNA-RuvA(4)-RuvB(12)-RuvC(2) complex forms which resolves the HJ.

The protein localises to the cytoplasm. Functionally, the RuvA-RuvB-RuvC complex processes Holliday junction (HJ) DNA during genetic recombination and DNA repair, while the RuvA-RuvB complex plays an important role in the rescue of blocked DNA replication forks via replication fork reversal (RFR). RuvA specifically binds to HJ cruciform DNA, conferring on it an open structure. The RuvB hexamer acts as an ATP-dependent pump, pulling dsDNA into and through the RuvAB complex. HJ branch migration allows RuvC to scan DNA until it finds its consensus sequence, where it cleaves and resolves the cruciform DNA. This chain is Holliday junction branch migration complex subunit RuvA, found in Streptococcus pyogenes serotype M6 (strain ATCC BAA-946 / MGAS10394).